Here is a 220-residue protein sequence, read N- to C-terminus: Protein GrpE (220 aa).

Residues 1 to 55 form a disordered region; the sequence is MCGGDVQGQGVASGCDEALERADSLRASDPVPVESGEGSVPGEHSQELETGASEE.

It belongs to the GrpE family. As to quaternary structure, homodimer.

It localises to the cytoplasm. Participates actively in the response to hyperosmotic and heat shock by preventing the aggregation of stress-denatured proteins, in association with DnaK and GrpE. It is the nucleotide exchange factor for DnaK and may function as a thermosensor. Unfolded proteins bind initially to DnaJ; upon interaction with the DnaJ-bound protein, DnaK hydrolyzes its bound ATP, resulting in the formation of a stable complex. GrpE releases ADP from DnaK; ATP binding to DnaK triggers the release of the substrate protein, thus completing the reaction cycle. Several rounds of ATP-dependent interactions between DnaJ, DnaK and GrpE are required for fully efficient folding. In Treponema pallidum (strain Nichols), this protein is Protein GrpE.